Reading from the N-terminus, the 344-residue chain is Dihydroorotase (344 aa).

The Zn(2+) site is built by H14 and H16. Substrate is bound by residues 16 to 18 (HLR) and N42. The Zn(2+) site is built by K100, H137, and H175. N6-carboxylysine is present on K100. Position 137 (H137) interacts with substrate. L220 is a binding site for substrate. D248 serves as a coordination point for Zn(2+). D248 is an active-site residue. The substrate site is built by H252 and A264.

Belongs to the metallo-dependent hydrolases superfamily. DHOase family. Class II DHOase subfamily. Homodimer. It depends on Zn(2+) as a cofactor.

It carries out the reaction (S)-dihydroorotate + H2O = N-carbamoyl-L-aspartate + H(+). It participates in pyrimidine metabolism; UMP biosynthesis via de novo pathway; (S)-dihydroorotate from bicarbonate: step 3/3. Its function is as follows. Catalyzes the reversible cyclization of carbamoyl aspartate to dihydroorotate. This chain is Dihydroorotase, found in Cupriavidus taiwanensis (strain DSM 17343 / BCRC 17206 / CCUG 44338 / CIP 107171 / LMG 19424 / R1) (Ralstonia taiwanensis (strain LMG 19424)).